The following is a 225-amino-acid chain: MRIDIITVLPEMIENTLNCSIIGRAQERGLLELKLHQLRDYSTDKWKRVDDYPFGGEPGMVMQVEPIDRIITELKTQREYDEVIFTSPDGERFDQPMANELSLLSNLIILCGHYKGIDYRIREHLITREISIGDYVLTGGELAAAVMTDAIARLIPGVLNDAGSALSDTFQDNLLAPPVYTRPAEYKGWRVPDILLSGHEANIAKWRLEQAVERTKRLRPDLIKD.

Residues glycine 112 and 132-137 contribute to the S-adenosyl-L-methionine site; that span reads IGDYVL.

This sequence belongs to the RNA methyltransferase TrmD family. Homodimer.

Its subcellular location is the cytoplasm. The enzyme catalyses guanosine(37) in tRNA + S-adenosyl-L-methionine = N(1)-methylguanosine(37) in tRNA + S-adenosyl-L-homocysteine + H(+). Its function is as follows. Specifically methylates guanosine-37 in various tRNAs. This is tRNA (guanine-N(1)-)-methyltransferase from Porphyromonas gingivalis (strain ATCC 33277 / DSM 20709 / CIP 103683 / JCM 12257 / NCTC 11834 / 2561).